The sequence spans 412 residues: CHRNA7-FAM7A fusion protein (412 aa).

Transmembrane regions (helical) follow at residues 144–164 (GLNL…VFLL), 172–192 (ISLG…VAEI), 205–225 (QYFA…VIVL), 240–254 (WTRV…WFLR), and 380–400 (LCLM…LMSA).

The protein belongs to the ligand-gated ion channel (TC 1.A.9) family. As to expression, expressed in hippocampus.

Its subcellular location is the membrane. The protein is CHRNA7-FAM7A fusion protein (CHRFAM7A) of Homo sapiens (Human).